We begin with the raw amino-acid sequence, 42 residues long: Potassium channel toxin gamma-KTx 1.5 (42 aa).

4 disulfide bridges follow: cysteine 5-cysteine 23, cysteine 11-cysteine 34, cysteine 20-cysteine 39, and cysteine 24-cysteine 41.

The protein belongs to the ergtoxin family. Gamma-KTx 1 subfamily. Expressed by the venom gland.

It is found in the secreted. Blocks Kv11/ERG potassium channels. In Centruroides limpidus (Mexican scorpion), this protein is Potassium channel toxin gamma-KTx 1.5.